Consider the following 263-residue polypeptide: Probable elongation factor 1-beta/1-delta 2 (263 aa).

Residue serine 2 is modified to N-acetylserine. A disordered region spans residues 112 to 153 (QGQTSSVAAPAAAPAAAKEEAAGDDDFDLFGSEDEEEDEEKK). Positions 133-150 (AGDDDFDLFGSEDEEEDE) are enriched in acidic residues.

This sequence belongs to the EF-1-beta/EF-1-delta family. EF-1 is composed of 4 subunits: alpha, beta, delta, and gamma.

Functionally, EF-1-beta and EF-1-delta stimulate the exchange of GDP bound to EF-1-alpha to GTP. This Caenorhabditis elegans protein is Probable elongation factor 1-beta/1-delta 2.